The following is a 543-amino-acid chain: Chaperonin GroEL (543 aa).

Residues 29 to 32 (TLGP), K50, 86 to 90 (DGTTT), G413, 480 to 482 (NAA), and D496 contribute to the ATP site. The interval 524-543 (EKPEKKESTPASAGAGDMDF) is disordered.

This sequence belongs to the chaperonin (HSP60) family. As to quaternary structure, forms a cylinder of 14 subunits composed of two heptameric rings stacked back-to-back. Interacts with the co-chaperonin GroES.

The protein localises to the cytoplasm. The catalysed reaction is ATP + H2O + a folded polypeptide = ADP + phosphate + an unfolded polypeptide.. Together with its co-chaperonin GroES, plays an essential role in assisting protein folding. The GroEL-GroES system forms a nano-cage that allows encapsulation of the non-native substrate proteins and provides a physical environment optimized to promote and accelerate protein folding. The polypeptide is Chaperonin GroEL (Thermus thermophilus (strain ATCC BAA-163 / DSM 7039 / HB27)).